The chain runs to 160 residues: Baculoviral IAP repeat-containing protein 5.1 (160 aa).

A BIR repeat occupies 27 to 97 (RLATFADWPF…KRSASCGFLS (71 aa)). T43 is subject to Phosphothreonine; by CDK1. Zn(2+) is bound by residues C66, C69, H86, and C93.

Belongs to the IAP family. Component of the CPC at least composed of survivin/birc5, incenp, cdca8/borealin and/or cdca9/dasra-A, and aurkb/aurora-B. Interacts directly with incenp (via N-terminus), and may weakly interact with aurkb (via N-terminus) to stabilize the complex. Interacts with GTP-bound ran in both the S and M phases of the cell cycle. Also found in a complex with ubiquitin-mediated signaling proteins including at least usp9x/xFAM, nploc4/npl4 and ufd1. Post-translationally, ubiquitination is required for centrosome-targeting.

The protein resides in the cytoplasm. It is found in the nucleus. The protein localises to the chromosome. It localises to the centromere. Its subcellular location is the cytoskeleton. The protein resides in the spindle. In terms of biological role, component of the chromosomal passenger complex (CPC), a complex that acts as a key regulator of mitosis. The CPC complex has essential functions at the centromere in ensuring correct chromosome alignment and segregation and is required for chromatin-induced microtubule stabilization and spindle assembly. Stimulates the mitotic kinase activity of aurkb/aurora-B in the CPC. Does not appear to exhibit anti-apoptotic activity. This chain is Baculoviral IAP repeat-containing protein 5.1 (birc5.1), found in Xenopus tropicalis (Western clawed frog).